The sequence spans 120 residues: Fumarate reductase subunit D (120 aa).

3 consecutive transmembrane segments (helical) span residues 25 to 45, 55 to 75, and 100 to 120; these read FAML…LGVI, VAGF…ISMP, and IACY…IFMI.

The protein belongs to the FrdD family. As to quaternary structure, part of an enzyme complex containing four subunits: a flavoprotein (FrdA), an iron-sulfur protein (FrdB), and two hydrophobic anchor proteins (FrdC and FrdD).

It is found in the cell inner membrane. In terms of biological role, anchors the catalytic components of the fumarate reductase complex to the cell membrane, binds quinones. The sequence is that of Fumarate reductase subunit D from Aliivibrio salmonicida (strain LFI1238) (Vibrio salmonicida (strain LFI1238)).